A 322-amino-acid polypeptide reads, in one-letter code: MNGKTIILANPRGFCAGVDRAISIVERALEEFGAPVYVRHEVVHNKFVVDNLREKGAVFIEDLAEVPPGATLVYSAHGVSKAVQQEAAERGFRVFDATCPLVTKVHKEVARLDAQDCEIIMIGHKGHAEVEGTMGQLAPGKMLLVETVGDVAKLEVRNPDKLAYVSQTTLSVDETKDIIAALNARFPNIRNPHKEDICYATTNRQTAVKELAEQCDIVIVVGSPNSSNSNRLREVAASRGIDAYMVDNASYLQRTWFEGKSKVGVTAGASAPEVLVREVLATIRGWGHETVREGGGAEESIVFVLPKELRREGETKPDLCKR.

Cys-15 is a [4Fe-4S] cluster binding site. The (2E)-4-hydroxy-3-methylbut-2-enyl diphosphate site is built by His-44 and His-77. Dimethylallyl diphosphate is bound by residues His-44 and His-77. Isopentenyl diphosphate is bound by residues His-44 and His-77. Cys-99 contacts [4Fe-4S] cluster. Residue His-127 participates in (2E)-4-hydroxy-3-methylbut-2-enyl diphosphate binding. His-127 lines the dimethylallyl diphosphate pocket. His-127 serves as a coordination point for isopentenyl diphosphate. Glu-129 (proton donor) is an active-site residue. Thr-168 serves as a coordination point for (2E)-4-hydroxy-3-methylbut-2-enyl diphosphate. A [4Fe-4S] cluster-binding site is contributed by Cys-198. Positions 226, 227, 228, and 270 each coordinate (2E)-4-hydroxy-3-methylbut-2-enyl diphosphate. Residues Ser-226, Ser-227, Asn-228, and Ser-270 each coordinate dimethylallyl diphosphate. Ser-226, Ser-227, Asn-228, and Ser-270 together coordinate isopentenyl diphosphate.

This sequence belongs to the IspH family. Requires [4Fe-4S] cluster as cofactor.

It carries out the reaction isopentenyl diphosphate + 2 oxidized [2Fe-2S]-[ferredoxin] + H2O = (2E)-4-hydroxy-3-methylbut-2-enyl diphosphate + 2 reduced [2Fe-2S]-[ferredoxin] + 2 H(+). The catalysed reaction is dimethylallyl diphosphate + 2 oxidized [2Fe-2S]-[ferredoxin] + H2O = (2E)-4-hydroxy-3-methylbut-2-enyl diphosphate + 2 reduced [2Fe-2S]-[ferredoxin] + 2 H(+). The protein operates within isoprenoid biosynthesis; dimethylallyl diphosphate biosynthesis; dimethylallyl diphosphate from (2E)-4-hydroxy-3-methylbutenyl diphosphate: step 1/1. It participates in isoprenoid biosynthesis; isopentenyl diphosphate biosynthesis via DXP pathway; isopentenyl diphosphate from 1-deoxy-D-xylulose 5-phosphate: step 6/6. Catalyzes the conversion of 1-hydroxy-2-methyl-2-(E)-butenyl 4-diphosphate (HMBPP) into a mixture of isopentenyl diphosphate (IPP) and dimethylallyl diphosphate (DMAPP). Acts in the terminal step of the DOXP/MEP pathway for isoprenoid precursor biosynthesis. This is 4-hydroxy-3-methylbut-2-enyl diphosphate reductase from Neisseria gonorrhoeae (strain ATCC 700825 / FA 1090).